Consider the following 129-residue polypeptide: Glycine cleavage system H protein (129 aa).

Residues 24 to 106 (IATIGITEFA…YGEGWFLKVR (83 aa)) form the Lipoyl-binding domain. Lys-65 carries the post-translational modification N6-lipoyllysine.

The protein belongs to the GcvH family. The glycine cleavage system is composed of four proteins: P, T, L and H. (R)-lipoate serves as cofactor.

Functionally, the glycine cleavage system catalyzes the degradation of glycine. The H protein shuttles the methylamine group of glycine from the P protein to the T protein. The protein is Glycine cleavage system H protein of Nostoc punctiforme (strain ATCC 29133 / PCC 73102).